The primary structure comprises 159 residues: Eukaryotic translation initiation factor 5A-4 (159 aa).

A compositionally biased stretch (basic and acidic residues) spans 1–12 (MSDEEHQFESKA). A disordered region spans residues 1 to 21 (MSDEEHQFESKADAGASKTYP). Position 52 is a hypusine (Lys52).

The protein belongs to the eIF-5A family. Post-translationally, lys-52 undergoes hypusination, a unique post-translational modification that consists in the addition of a butylamino group from spermidine to lysine side chain, leading to the formation of the unusual amino acid hypusine. eIF-5As are the only known proteins to undergo this modification, which is essential for their function.

Functionally, translation factor that promotes translation elongation and termination, particularly upon ribosome stalling at specific amino acid sequence contexts. Binds between the exit (E) and peptidyl (P) site of the ribosome and promotes rescue of stalled ribosome: specifically required for efficient translation of polyproline-containing peptides as well as other motifs that stall the ribosome. Acts as a ribosome quality control (RQC) cofactor by joining the RQC complex to facilitate peptidyl transfer during CAT tailing step. In Solanum tuberosum (Potato), this protein is Eukaryotic translation initiation factor 5A-4 (EIF5A4).